We begin with the raw amino-acid sequence, 326 residues long: Polycomb complex protein BMI-1 (326 aa).

Residues 18 to 57 (CVLCGGYFIDATTIIECLHSFCKTCIVRYLETSKYCPICD) form an RING-type zinc finger. The short motif at 81–95 (KLVPGLFKNEMKRRR) is the Nuclear localization signal element. Positions 162–182 (RYLRCPAAMTVMHLRKFLRSK) are interaction with PHC2. Positions 164 to 228 (LRCPAAMTVM…GPLPLKYRVR (65 aa)) are interaction with E4F1. A disordered region spans residues 236–326 (IGHQREGLSN…INGSSATSSG (91 aa)). Over residues 265–278 (LPSTSSCLPSPSTP) the composition is skewed to low complexity. The span at 279-310 (VQSPHPQFPHISSTMNGTSSSPGSNHQSSFTN) shows a compositional bias: polar residues. Residues 315–326 (SSINGSSATSSG) are compositionally biased toward low complexity.

As to quaternary structure, component of a PRC1-like complex.

The protein resides in the nucleus. Its subcellular location is the cytoplasm. Component of a Polycomb group (PcG) multiprotein PRC1-like complex, a complex class required to maintain the transcriptionally repressive state of many genes, including Hox genes, throughout development. PcG PRC1 complex acts via chromatin remodeling and modification of histones; it mediates monoubiquitination of histone H2A 'Lys-119', rendering chromatin heritably changed in its expressibility. In the PRC1-like complex, regulates the E3 ubiquitin-protein ligase activity of RNF2/RING2. The protein is Polycomb complex protein BMI-1 (BMI1) of Gallus gallus (Chicken).